Consider the following 189-residue polypeptide: UPF0301 protein PLES_04031 (189 aa).

It belongs to the UPF0301 (AlgH) family.

The protein is UPF0301 protein PLES_04031 of Pseudomonas aeruginosa (strain LESB58).